Here is a 202-residue protein sequence, read N- to C-terminus: CASP-like protein 1U4 (202 aa).

Over Met1–Pro10 the chain is Cytoplasmic. The helical transmembrane segment at Val11–Leu31 threads the bilayer. At Thr32–Ala56 the chain is on the extracellular side. Residues Phe57–Leu77 traverse the membrane as a helical segment. At Ser78–Met94 the chain is on the cytoplasmic side. A helical transmembrane segment spans residues Leu95–Val115. Over Gly116–His146 the chain is Extracellular. The helical transmembrane segment at Val147–Leu167 threads the bilayer. Over Thr168 to His202 the chain is Cytoplasmic.

Belongs to the Casparian strip membrane proteins (CASP) family. In terms of assembly, homodimer and heterodimers.

Its subcellular location is the cell membrane. The sequence is that of CASP-like protein 1U4 from Sorghum bicolor (Sorghum).